The following is a 164-amino-acid chain: MWSRFMINVKVSAAVYPTEDPEKVTKAISVLFTGIELQKEPLDAAESEKRVSPAFRLTGEGGLDLLFTLHGLIRREAIIDSIRNKVFSKGLSSEGLLVRFLLNKQAAFVGIPSVPAEEEPLGSIEVVIRTDSPEEMEKLFEWLLPLTEEGVPVVEVEMDYVERG.

It belongs to the UPF0201 family.

The polypeptide is UPF0201 protein MA_4659 (Methanosarcina acetivorans (strain ATCC 35395 / DSM 2834 / JCM 12185 / C2A)).